Reading from the N-terminus, the 93-residue chain is Large ribosomal subunit protein uL23cz/uL23cy (93 aa).

It belongs to the universal ribosomal protein uL23 family. As to quaternary structure, part of the 50S ribosomal subunit.

Its subcellular location is the plastid. The protein resides in the chloroplast. Binds to 23S rRNA. The polypeptide is Large ribosomal subunit protein uL23cz/uL23cy (rpl23-A) (Citrus sinensis (Sweet orange)).